The chain runs to 830 residues: Formin-like protein 14 (830 aa).

Positions 1-34 (MAMAMAMPSSSPPLFFSLLNLMLLLLLLAPYCSA) are cleaved as a signal peptide. Residues 40–59 (NNTHHRSSSPTQTTLQQLHS) are compositionally biased toward polar residues. A disordered region spans residues 40–195 (NNTHHRSSSP…NISTLVHPTQ (156 aa)). Pro residues-rich tracts occupy residues 61 to 86 (DSPPPPPLPTPTVTTPTPPPPPPAPR) and 95 to 135 (PPPP…PTPK). Residues 149 to 160 (YPFTNYPFFPNF) show a composition bias toward low complexity. Residues 203–223 (VLQALLLSFLSLCLLLLSALL) form a helical membrane-spanning segment. A disordered region spans residues 235-446 (HHSHSHPNAR…LHSDKLKPGS (212 aa)). The span at 314–323 (RPLPPLPRVG) shows a compositional bias: pro residues. Positions 324–369 (PPSGEFASRSSASDPSTAPPAAAEASSSSLSPSSPSASSPTLGSSP) are enriched in low complexity. The FH2 domain maps to 390-823 (PKRRPQPPEP…MMGRDWNMAA (434 aa)). The segment covering 424-446 (HSPSEKSMRKSRPLHSDKLKPGS) has biased composition (basic and acidic residues).

This sequence belongs to the formin-like family. Class-I subfamily.

It is found in the membrane. The polypeptide is Formin-like protein 14 (FH14) (Oryza sativa subsp. japonica (Rice)).